Consider the following 104-residue polypeptide: Flagellar hook-basal body complex protein FliE (104 aa).

It belongs to the FliE family.

Its subcellular location is the bacterial flagellum basal body. The protein is Flagellar hook-basal body complex protein FliE of Escherichia coli (strain 55989 / EAEC).